Reading from the N-terminus, the 600-residue chain is Putative fucosyltransferase R654 (600 aa).

Belongs to the glycosyltransferase 10 family.

The polypeptide is Putative fucosyltransferase R654 (Acanthamoeba polyphaga mimivirus (APMV)).